A 405-amino-acid chain; its full sequence is Arginine biosynthesis bifunctional protein ArgJ (405 aa).

Substrate contacts are provided by threonine 152, lysine 178, threonine 189, glutamate 276, asparagine 400, and threonine 405. Threonine 189 serves as the catalytic Nucleophile.

This sequence belongs to the ArgJ family. In terms of assembly, heterotetramer of two alpha and two beta chains.

It is found in the cytoplasm. It carries out the reaction N(2)-acetyl-L-ornithine + L-glutamate = N-acetyl-L-glutamate + L-ornithine. The enzyme catalyses L-glutamate + acetyl-CoA = N-acetyl-L-glutamate + CoA + H(+). It participates in amino-acid biosynthesis; L-arginine biosynthesis; L-ornithine and N-acetyl-L-glutamate from L-glutamate and N(2)-acetyl-L-ornithine (cyclic): step 1/1. It functions in the pathway amino-acid biosynthesis; L-arginine biosynthesis; N(2)-acetyl-L-ornithine from L-glutamate: step 1/4. Functionally, catalyzes two activities which are involved in the cyclic version of arginine biosynthesis: the synthesis of N-acetylglutamate from glutamate and acetyl-CoA as the acetyl donor, and of ornithine by transacetylation between N(2)-acetylornithine and glutamate. This is Arginine biosynthesis bifunctional protein ArgJ from Pseudomonas savastanoi pv. phaseolicola (strain 1448A / Race 6) (Pseudomonas syringae pv. phaseolicola (strain 1448A / Race 6)).